The following is a 357-amino-acid chain: Alanine racemase, catabolic (357 aa).

Lysine 33 (proton acceptor; specific for D-alanine) is an active-site residue. Position 33 is an N6-(pyridoxal phosphate)lysine (lysine 33). Lysine 122 is modified (N6-carboxylysine). Arginine 129 is a substrate binding site. Residue tyrosine 253 is the Proton acceptor; specific for L-alanine of the active site. Methionine 301 lines the substrate pocket.

Belongs to the alanine racemase family. As to quaternary structure, homodimer. It depends on pyridoxal 5'-phosphate as a cofactor.

It catalyses the reaction L-alanine = D-alanine. Its function is as follows. Isomerizes L-alanine to D-alanine which is then oxidized to pyruvate by DadA. This Pseudomonas aeruginosa (strain ATCC 15692 / DSM 22644 / CIP 104116 / JCM 14847 / LMG 12228 / 1C / PRS 101 / PAO1) protein is Alanine racemase, catabolic.